The sequence spans 820 residues: DNA mismatch repair protein MutS (820 aa).

618-625 (GPNMAGKS) is a binding site for ATP.

The protein belongs to the DNA mismatch repair MutS family.

This protein is involved in the repair of mismatches in DNA. It is possible that it carries out the mismatch recognition step. This protein has a weak ATPase activity. This chain is DNA mismatch repair protein MutS, found in Chlamydia trachomatis serovar L2b (strain UCH-1/proctitis).